The following is a 106-amino-acid chain: L-rhamnose mutarotase (106 aa).

A substrate-binding site is contributed by tyrosine 20. Catalysis depends on histidine 24, which acts as the Proton donor. Residues tyrosine 43 and 78 to 79 contribute to the substrate site; that span reads WW.

It belongs to the rhamnose mutarotase family. As to quaternary structure, homodimer.

Its subcellular location is the cytoplasm. The catalysed reaction is alpha-L-rhamnose = beta-L-rhamnose. It functions in the pathway carbohydrate metabolism; L-rhamnose metabolism. Involved in the anomeric conversion of L-rhamnose. This Leptothrix cholodnii (strain ATCC 51168 / LMG 8142 / SP-6) (Leptothrix discophora (strain SP-6)) protein is L-rhamnose mutarotase.